Consider the following 315-residue polypeptide: tRNA dimethylallyltransferase (315 aa).

11–18 (GPTASGKS) provides a ligand contact to ATP. A substrate-binding site is contributed by 13-18 (TASGKS). Interaction with substrate tRNA stretches follow at residues 36–39 (DSMQ) and 160–164 (QRLIR).

This sequence belongs to the IPP transferase family. As to quaternary structure, monomer. Requires Mg(2+) as cofactor.

The catalysed reaction is adenosine(37) in tRNA + dimethylallyl diphosphate = N(6)-dimethylallyladenosine(37) in tRNA + diphosphate. Catalyzes the transfer of a dimethylallyl group onto the adenine at position 37 in tRNAs that read codons beginning with uridine, leading to the formation of N6-(dimethylallyl)adenosine (i(6)A). This Rickettsia bellii (strain OSU 85-389) protein is tRNA dimethylallyltransferase.